Consider the following 1007-residue polypeptide: MGADARPLGVRAGGGGRGAARPGTSSRALPPPLPPLSFLLLLLAAPGARAAGYETCPMVHPDMLNVHLVAHTHDDVGWLKTVDQYFYGIHNDVQHAGVQYILDSVISSLLVEPTRRFIYVEIAFFSRWWHQQTNATQEVVRDLVRQGRLEFANGGWVMNDEAATHYGAIIDQMTLGLRFLEDTFGKDGRPRVAWHIDPFGHSREQASLFAQMGFDGLFFGRLDYQDKRVREENLGLEQVWRASASLKPPAADLFTSVLPNIYNPPEKLCWDTLCADKPFVEDRRSPEYNAEELVNYFLQLATAQGQHFRTNHTIMTMGSDFQYENANMWFRNLDRLIQLVNAQQQANGSRVNVLYSTPACYLWELNKANLTWSVKQDDFFPYADGPHQFWSGYFSSRPALKRYERLSYNFLQVCNQLEALAGPAANVGPYGSGDSAPLNQAMAVLQHHDAVSGTSKQHVADDYARQLAAGWDPCEVLLSNALARLSGSKEDFTYCRNLNVSVCPLSQTAKNFQVTIYNPLGRKIDWMVRLPVSKHGFVVRDPNGTVVPSDVVILPSSDGQELLFPASVPALGFSIYSVSQVPGQRPHAHKPQPRSQRPWSRVLAIQNEHIRARFDPDTGLLVEMENLDQNLLLPVRQAFYWYNASVGNNLSTQVSGAYIFRPNQEKPLMVSHWAQTRLVKTPLVQEVHQNFSAWCSQVVRLYRGQRHLELEWTVGPIPVGDGWGKEIISRFDTVLETKGLFYTDSNGREILERRRDYRPTWKLNQTETVAGNYYPVNSRIYIRDGNMQLTVLTDRSQGGSSLRDGSMELMVHRRLLKDDGRGVGEALLEDGLGRWVRGRHLVLLDKVRTAATGHRLQAEKEVLTPQVVLAPGGGAPYHLKVAPRKQFSGLRRELPPSVHLLTLARWDQKTLLLRLEHQFAVGEDSGNLSSPVTLDLTDLFSAFTITYLQETTLVANQLRASASRLKWTPNTGPTPLPSPSRLDPATITLQPMEIRTFLASVQWEEHG.

Low complexity-rich tracts occupy residues 1 to 10 (MGADARPLGV) and 19 to 28 (AARPGTSSRA). A disordered region spans residues 1 to 30 (MGADARPLGVRAGGGGRGAARPGTSSRALP). A signal peptide spans 1 to 50 (MGADARPLGVRAGGGGRGAARPGTSSRALPPPLPPLSFLLLLLAAPGARA). Intrachain disulfides connect cysteine 56–cysteine 360 and cysteine 269–cysteine 274. Histidine 73 and aspartate 75 together coordinate Zn(2+). N-linked (GlcNAc...) asparagine glycosylation is present at asparagine 134. A Zn(2+)-binding site is contributed by aspartate 197. Catalysis depends on aspartate 197, which acts as the Nucleophile. Asparagine 311, asparagine 347, and asparagine 369 each carry an N-linked (GlcNAc...) asparagine glycan. Disulfide bonds link cysteine 414-cysteine 474 and cysteine 495-cysteine 503. Histidine 448 serves as a coordination point for Zn(2+). N-linked (GlcNAc...) asparagine glycosylation is found at asparagine 499, asparagine 543, asparagine 643, asparagine 649, asparagine 690, asparagine 764, and asparagine 927.

It belongs to the glycosyl hydrolase 38 family. The cofactor is Zn(2+). In terms of processing, processed into 3 peptides of 72 kDa, 41 kDa and 12 kDa.

It is found in the lysosome. The catalysed reaction is Hydrolysis of terminal, non-reducing alpha-D-mannose residues in alpha-D-mannosides.. In terms of biological role, necessary for the catabolism of N-linked carbohydrates released during glycoprotein turnover. This chain is Lysosomal alpha-mannosidase (MAN2B1), found in Felis catus (Cat).